Consider the following 402-residue polypeptide: MDRTETRFRKRGQITGKITTSRQPHPQNEQSPQRSTSGYPLQEVVDDEMLGPSAPGVDPSPPCRSLGWKRKREWSDESEEEPEKELAPEPEETWVVEMLCGLKMKLKQQRVSSILPEHHKDFNSQLAPGVDPSPPHRSFCWKRKMEWWDESEESLEEEPRKVLAPEPEEIWVAEMLCGLKMKLKRRRVSLVLPEHHEAFNRLLEDPVIKRFLAWDKDLRVSDKYLLAMVIAYFSRAGFPSWQYQRIHFFLALYLANDMEEDDEDSKQNIFHFLYRKNRSRIPLLRKRWFQLGHSMNPRARKNRSRIPLLRKRRFQLYRSTNPRARKNRSRIPLLRKHRFQLYRSMNSRARKNRSQIVLFQKRRFHFFCSMSCRAWVSPEELEEIQAYDPEHWVWARDRAHLS.

Positions 1 to 89 (MDRTETRFRK…EEPEKELAPE (89 aa)) are disordered. Positions 16–39 (GKITTSRQPHPQNEQSPQRSTSGY) are enriched in polar residues. Residues 76 to 89 (DESEEEPEKELAPE) are compositionally biased toward acidic residues.

It belongs to the Speedy/Ringo family.

In Homo sapiens (Human), this protein is Speedy protein E6 (SPDYE6).